Here is a 674-residue protein sequence, read N- to C-terminus: Slender lobes-like protein (674 aa).

Disordered regions lie at residues 65–137, 168–321, and 352–382; these read LEKS…NASK, NELN…TIKK, and QKSR…RVEV. Residues 73 to 97 show a composition bias toward basic residues; that stretch reads PKKKVQTKKHLPPVRKKDSVKRRRI. The segment covering 127–137 has biased composition (polar residues); sequence NQSNCSSNASK. Residues 216–228 show a composition bias toward acidic residues; the sequence is VDSDDEEEQDQDQ. Basic and acidic residues predominate over residues 233–245; the sequence is KPAESENHSEIKK. Ser-248 carries the phosphoserine modification. Positions 272 to 312 are enriched in basic and acidic residues; the sequence is EDPKEAGKNEESDKDKPAENGKSDKDKQAETEMSDEDKPSE. Phosphoserine is present on residues Ser-358 and Ser-391. Disordered stretches follow at residues 395–585 and 618–659; these read MVAE…AGYV and KYFR…NSAK. The span at 400-410 shows a compositional bias: basic residues; it reads KRQKNKRKRLS. At Ser-414 the chain carries Phosphoserine. The segment covering 548-558 has biased composition (basic residues); the sequence is AKQKKKGKKKQ.

The polypeptide is Slender lobes-like protein (Drosophila melanogaster (Fruit fly)).